The chain runs to 250 residues: Putative beta-carotene-binding protein (250 aa).

In terms of tissue distribution, deposited in the epidermis and cuticle of male locusts during their sexual maturation.

Functionally, has beta-carotene-binding activity. May be involved in the transport of carotenes from internal tissues to epidermis and cuticle of the locust. In Schistocerca gregaria (Desert locust), this protein is Putative beta-carotene-binding protein.